The sequence spans 375 residues: 23S rRNA (uracil(747)-C(5))-methyltransferase RlmC (375 aa).

The [4Fe-4S] cluster site is built by C3, C11, C14, and C87. Residues Q212, F241, E262, and N307 each coordinate S-adenosyl-L-methionine. C334 acts as the Nucleophile in catalysis.

This sequence belongs to the class I-like SAM-binding methyltransferase superfamily. RNA M5U methyltransferase family. RlmC subfamily.

It catalyses the reaction uridine(747) in 23S rRNA + S-adenosyl-L-methionine = 5-methyluridine(747) in 23S rRNA + S-adenosyl-L-homocysteine + H(+). Its function is as follows. Catalyzes the formation of 5-methyl-uridine at position 747 (m5U747) in 23S rRNA. The sequence is that of 23S rRNA (uracil(747)-C(5))-methyltransferase RlmC from Pectobacterium atrosepticum (strain SCRI 1043 / ATCC BAA-672) (Erwinia carotovora subsp. atroseptica).